We begin with the raw amino-acid sequence, 131 residues long: Fumarate reductase subunit C (131 aa).

2 helical membrane passes run 60 to 80 (FVGF…LAAA) and 110 to 130 (IKGL…VALF).

It belongs to the FrdC family. Part of an enzyme complex containing four subunits: a flavoprotein (FrdA), an iron-sulfur protein (FrdB), and two hydrophobic anchor proteins (FrdC and FrdD).

The protein localises to the cell inner membrane. Functionally, two distinct, membrane-bound, FAD-containing enzymes are responsible for the catalysis of fumarate and succinate interconversion; fumarate reductase is used in anaerobic growth, and succinate dehydrogenase is used in aerobic growth. Anchors the catalytic components of the fumarate reductase complex to the cell inner membrane, binds quinones. This is Fumarate reductase subunit C from Enterobacter sp. (strain 638).